The following is a 512-amino-acid chain: Solute carrier family 40 member 2 (512 aa).

A disordered region spans residues 1–28; the sequence is MEEETETRVFLSNEQHQEEEEEEEEEPS. Residues 17–27 are compositionally biased toward acidic residues; the sequence is QEEEEEEEEEP. 11 helical membrane passes run 55–75, 105–125, 133–153, 187–207, 214–234, 310–330, 343–363, 376–396, 405–425, 442–462, and 468–488; these read VALY…MYGV, LVTQ…LLVV, FPVF…GVLS, GIDL…ISFV, ITFA…FISV, IVLP…FGTL, YIIG…TVLY, GVWS…SIWV, MLMA…LAVI, GVQN…GIIV, and FWML…LYTI.

This sequence belongs to the ferroportin (FP) (TC 2.A.100) family. SLC40A subfamily.

The protein localises to the vacuole membrane. Its function is as follows. Vacuolar transporter that is involved in the transport of excess nickel into the vacuole under iron deficiency, increasing cellular tolerance to nickel under iron deficiency stress response. In Arabidopsis thaliana (Mouse-ear cress), this protein is Solute carrier family 40 member 2 (IREG2).